Consider the following 403-residue polypeptide: Argininosuccinate synthase (403 aa).

Residue 9–17 (AYSGGLDTS) coordinates ATP. Residue tyrosine 86 participates in L-citrulline binding. An ATP-binding site is contributed by glycine 116. 3 residues coordinate L-aspartate: threonine 118, asparagine 122, and aspartate 123. Asparagine 122 provides a ligand contact to L-citrulline. Arginine 126, serine 174, serine 183, glutamate 259, and tyrosine 271 together coordinate L-citrulline.

Belongs to the argininosuccinate synthase family. Type 1 subfamily. As to quaternary structure, homotetramer.

The protein resides in the cytoplasm. It carries out the reaction L-citrulline + L-aspartate + ATP = 2-(N(omega)-L-arginino)succinate + AMP + diphosphate + H(+). It functions in the pathway amino-acid biosynthesis; L-arginine biosynthesis; L-arginine from L-ornithine and carbamoyl phosphate: step 2/3. The chain is Argininosuccinate synthase from Shouchella clausii (strain KSM-K16) (Alkalihalobacillus clausii).